A 1571-amino-acid polypeptide reads, in one-letter code: Pentafunctional AROM polypeptide (1571 aa).

Positions 1–384 (MEQPTTIQIL…HEQKASVVSN (384 aa)) are 3-dehydroquinate synthase. NAD(+)-binding positions include 44 to 46 (DTN), 81 to 84 (ESSK), 114 to 116 (GGV), and Asp-119. Arg-130 provides a ligand contact to 7-phospho-2-dehydro-3-deoxy-D-arabino-heptonate. 139–140 (TT) is a binding site for NAD(+). Residues Asp-146 and Lys-152 each contribute to the 7-phospho-2-dehydro-3-deoxy-D-arabino-heptonate site. Lys-161 contributes to the NAD(+) binding site. Asn-162 contributes to the 7-phospho-2-dehydro-3-deoxy-D-arabino-heptonate binding site. Residues 179–182 (FLNT) and Asn-190 each bind NAD(+). Zn(2+) is bound at residue Glu-194. Residues 194–197 (EVIK) and Lys-250 each bind 7-phospho-2-dehydro-3-deoxy-D-arabino-heptonate. Catalysis depends on Glu-260, which acts as the Proton acceptor; for 3-dehydroquinate synthase activity. 7-phospho-2-dehydro-3-deoxy-D-arabino-heptonate contacts are provided by residues 264 to 268 (RNLLN) and His-271. Position 271 (His-271) interacts with Zn(2+). The active-site Proton acceptor; for 3-dehydroquinate synthase activity is the His-275. Residues His-287 and Lys-356 each coordinate 7-phospho-2-dehydro-3-deoxy-D-arabino-heptonate. Zn(2+) is bound at residue His-287. The EPSP synthase stretch occupies residues 397–843 (VLPGIPKPLN…WDALAQTFKV (447 aa)). The For EPSP synthase activity role is filled by Cys-825. Positions 866 to 1057 (ASIFIIGMRG…KKKDHSFFVS (192 aa)) are shikimate kinase. Residue 872–879 (GMRGAGKT) participates in ATP binding. Residues 1058–1278 (LTLPDLQLSA…AAPGQVSAKD (221 aa)) form a 3-dehydroquinase region. His-1181 functions as the Proton acceptor; for 3-dehydroquinate dehydratase activity in the catalytic mechanism. Catalysis depends on Lys-1209, which acts as the Schiff-base intermediate with substrate; for 3-dehydroquinate dehydratase activity. The segment at 1291–1571 (AKKFALFGKP…EDARAAVMNI (281 aa)) is shikimate dehydrogenase.

In the N-terminal section; belongs to the sugar phosphate cyclases superfamily. Dehydroquinate synthase family. The protein in the 2nd section; belongs to the EPSP synthase family. This sequence in the 3rd section; belongs to the shikimate kinase family. It in the 4th section; belongs to the type-I 3-dehydroquinase family. In the C-terminal section; belongs to the shikimate dehydrogenase family. In terms of assembly, homodimer. The cofactor is Zn(2+).

It is found in the cytoplasm. The enzyme catalyses 7-phospho-2-dehydro-3-deoxy-D-arabino-heptonate = 3-dehydroquinate + phosphate. The catalysed reaction is 3-dehydroquinate = 3-dehydroshikimate + H2O. It carries out the reaction shikimate + NADP(+) = 3-dehydroshikimate + NADPH + H(+). It catalyses the reaction shikimate + ATP = 3-phosphoshikimate + ADP + H(+). The enzyme catalyses 3-phosphoshikimate + phosphoenolpyruvate = 5-O-(1-carboxyvinyl)-3-phosphoshikimate + phosphate. The protein operates within metabolic intermediate biosynthesis; chorismate biosynthesis; chorismate from D-erythrose 4-phosphate and phosphoenolpyruvate: step 2/7. It participates in metabolic intermediate biosynthesis; chorismate biosynthesis; chorismate from D-erythrose 4-phosphate and phosphoenolpyruvate: step 3/7. It functions in the pathway metabolic intermediate biosynthesis; chorismate biosynthesis; chorismate from D-erythrose 4-phosphate and phosphoenolpyruvate: step 4/7. Its pathway is metabolic intermediate biosynthesis; chorismate biosynthesis; chorismate from D-erythrose 4-phosphate and phosphoenolpyruvate: step 5/7. The protein operates within metabolic intermediate biosynthesis; chorismate biosynthesis; chorismate from D-erythrose 4-phosphate and phosphoenolpyruvate: step 6/7. Its function is as follows. The AROM polypeptide catalyzes 5 consecutive enzymatic reactions in prechorismate polyaromatic amino acid biosynthesis. The sequence is that of Pentafunctional AROM polypeptide from Arthroderma otae (strain ATCC MYA-4605 / CBS 113480) (Microsporum canis).